Consider the following 534-residue polypeptide: Peptide chain release factor 3 (534 aa).

The tr-type G domain occupies 9–278; that stretch reads ARRRTFAIIS…FFVEHAPPPQ (270 aa). GTP is bound by residues 18-25, 86-90, and 140-143; these read SHPDAGKT, DTPGH, and NKLD.

This sequence belongs to the TRAFAC class translation factor GTPase superfamily. Classic translation factor GTPase family. PrfC subfamily.

The protein resides in the cytoplasm. Functionally, increases the formation of ribosomal termination complexes and stimulates activities of RF-1 and RF-2. It binds guanine nucleotides and has strong preference for UGA stop codons. It may interact directly with the ribosome. The stimulation of RF-1 and RF-2 is significantly reduced by GTP and GDP, but not by GMP. This Xanthomonas axonopodis pv. citri (strain 306) protein is Peptide chain release factor 3.